The following is a 906-amino-acid chain: Transmembrane channel-like protein 2 (906 aa).

The tract at residues 1–150 (MSHQVKGLKE…SASGGESLSE (150 aa)) is disordered. Topologically, residues 1–263 (MSHQVKGLKE…IFLRWMYGVN (263 aa)) are cytoplasmic. Residues 69–79 (PRRKQTGRRRH) show a composition bias toward basic residues. Positions 80–127 (REELGEQERGEAERTCEGRRKRDERASFQERTAAPKREKEIPRREEKS) are enriched in basic and acidic residues. The segment covering 135-147 (SSSLASSASGGES) has biased composition (low complexity). A helical membrane pass occupies residues 264–284 (LVLFGLIFGLVIIPEVLMGMP). The Extracellular portion of the chain corresponds to 285–336 (YGSIPRKTVPRAEEEKAMDFSVLWDFEGYIKYSALFYGYYNNQRTIGWLRYR). A helical transmembrane segment spans residues 337–357 (LPMAYFMVGVSVFGYSLIIVI). Topologically, residues 358–431 (RSMASNTQGS…NIHLTRFLRV (74 aa)) are cytoplasmic. Residues 432-452 (LANFLIICCLCGSGYLIYFVV) traverse the membrane as a helical segment. Residues 453 to 508 (KRSQQFSKMQNVSWYERNEVEIVMSLLGMFCPPLFETIAALENYHPRTGLKWQLGR) are Extracellular-facing. A helical transmembrane segment spans residues 509-529 (IFALFLGNLYTFLLALMDDVH). Over 530–693 (LKLANEETIK…RVFKASRSNN (164 aa)) the chain is Cytoplasmic. Residues 694-714 (FYMGLLLLVLFLSLLPVAYTI) form a helical membrane-spanning segment. At 715–750 (MSLPPSFDCGPFSGKNRMYDVLQETIENDFPTFLGK) the chain is on the extracellular side. A helical membrane pass occupies residues 751–771 (IFAFLANPGLIIPAILLMFLA). Residues 772–906 (IYYLNSVSKS…SGKSAQRPPH (135 aa)) lie on the Cytoplasmic side of the membrane. The segment at 800 to 906 (EKSHKSVKGK…SGKSAQRPPH (107 aa)) is disordered. 3 stretches are compositionally biased toward polar residues: residues 820-846 (KSSS…QSQA), 854-866 (PGTS…TTLP), and 886-900 (APSQ…SGKS).

The protein belongs to the TMC family. In terms of assembly, forms the MET channel composed of TMC dimer (TMC1 or TMC2), TMIE, TOMT, CIB (CIB2 or CIB3), LHFPL5 and PDH15. The interaction of TMC1 and TMC2 with TOMT is required for the transportation of TMC1/2 into the stereocilia of hair cells. Interacts (via N-terminus) with both isoforms CD1 and CD3 of PCDH15. Can form a heterodimer with TMC1, TMC5 or TMC7. In terms of tissue distribution, detected in fetal cochlea.

The protein resides in the cell membrane. The catalysed reaction is Ca(2+)(in) = Ca(2+)(out). Its function is as follows. Pore-forming subunit of the mechanotransducer (MET) non-selective cation channel complex located at the tips of stereocilia of cochlear hair cells and that mediates sensory transduction in the auditory system. The MET complex is composed of two dimeric pore-forming ion-conducting transmembrane TMC (TMC1 or TMC2) subunits, and aided by several auxiliary proteins including LHFPL5, TMIE, CIB2/3 and TOMT, and the tip-link PCDH15. MET channel is activated by tension in the tip-link extending from the side wall of one stereocilium to the tip of the adjacent shorter stereocilium, where the channel is located. TMC2 MET channel is highly permeable to calcium and likely transports monovalent cations. Also involved in vestibular hair cell transduction current of the mammalian inner ear. This chain is Transmembrane channel-like protein 2, found in Homo sapiens (Human).